A 171-amino-acid polypeptide reads, in one-letter code: Acetyltransferase PA2271 (171 aa).

In terms of domain architecture, N-acetyltransferase spans 3 to 162 (YRIRTSRDED…HEQEIGFAAD (160 aa)). Residues 84 to 86 (LSI) and 128 to 130 (PFY) each bind CoA.

Functionally, catalyzes the transfer of an acetyl group from acetyl coenzyme A (AcCoA) to an acceptor substrate and releases both CoA and the acetylated product. It can use a variety of substrates including spermidine, spermine and N(8)-acetylspermidine, 7-aminocephalosporanic acid, colistin and thiamine. The protein is Acetyltransferase PA2271 of Pseudomonas aeruginosa (strain ATCC 15692 / DSM 22644 / CIP 104116 / JCM 14847 / LMG 12228 / 1C / PRS 101 / PAO1).